A 463-amino-acid polypeptide reads, in one-letter code: L-seryl-tRNA(Sec) selenium transferase (463 aa).

K295 is modified (N6-(pyridoxal phosphate)lysine).

The protein belongs to the SelA family. As to quaternary structure, homodecamer; pentamer of dimers. Binds only one seryl-tRNA(Sec) per dimer. It depends on pyridoxal 5'-phosphate as a cofactor.

The protein resides in the cytoplasm. It carries out the reaction L-seryl-tRNA(Sec) + selenophosphate + H(+) = L-selenocysteinyl-tRNA(Sec) + phosphate. The protein operates within aminoacyl-tRNA biosynthesis; selenocysteinyl-tRNA(Sec) biosynthesis; selenocysteinyl-tRNA(Sec) from L-seryl-tRNA(Sec) (bacterial route): step 1/1. Functionally, converts seryl-tRNA(Sec) to selenocysteinyl-tRNA(Sec) required for selenoprotein biosynthesis. This Escherichia coli O139:H28 (strain E24377A / ETEC) protein is L-seryl-tRNA(Sec) selenium transferase.